A 239-amino-acid chain; its full sequence is tRNA (guanine-N(7)-)-methyltransferase (239 aa).

S-adenosyl-L-methionine-binding residues include glutamate 69, glutamate 94, aspartate 121, and aspartate 144. Aspartate 144 is a catalytic residue. Lysine 148 contributes to the substrate binding site. The interaction with RNA stretch occupies residues 150 to 155; it reads RHNKRR. Residues aspartate 180 and 217 to 220 each bind substrate; that span reads TKFE.

This sequence belongs to the class I-like SAM-binding methyltransferase superfamily. TrmB family. In terms of assembly, monomer.

It carries out the reaction guanosine(46) in tRNA + S-adenosyl-L-methionine = N(7)-methylguanosine(46) in tRNA + S-adenosyl-L-homocysteine. Its pathway is tRNA modification; N(7)-methylguanine-tRNA biosynthesis. Functionally, catalyzes the formation of N(7)-methylguanine at position 46 (m7G46) in tRNA. The polypeptide is tRNA (guanine-N(7)-)-methyltransferase (Pectobacterium atrosepticum (strain SCRI 1043 / ATCC BAA-672) (Erwinia carotovora subsp. atroseptica)).